A 161-amino-acid polypeptide reads, in one-letter code: Troponin C, slow skeletal and cardiac muscles (161 aa).

At Met-1 the chain carries N-acetylmethionine. 4 consecutive EF-hand domains span residues 16-51 (QKNE…LGQN), 52-87 (PTPE…CMKD), 92-127 (KTEE…TGET), and 128-161 (ITED…KGVE). 13 residues coordinate Ca(2+): Asp-65, Asp-67, Ser-69, Thr-71, Asp-105, Asn-107, Asp-109, Tyr-111, Glu-116, Asn-143, Asp-145, Arg-147, and Glu-152.

The protein belongs to the troponin C family.

In terms of biological role, troponin is the central regulatory protein of striated muscle contraction. Tn consists of three components: Tn-I which is the inhibitor of actomyosin ATPase, Tn-T which contains the binding site for tropomyosin and Tn-C. The binding of calcium to Tn-C abolishes the inhibitory action of Tn on actin filaments. In Coturnix japonica (Japanese quail), this protein is Troponin C, slow skeletal and cardiac muscles (TNNC1).